Consider the following 1245-residue polypeptide: ATP-dependent helicase/nuclease subunit A (1245 aa).

Positions 4 to 477 (TKWTDEQLSA…IQLYKNFRSR (474 aa)) constitute a UvrD-like helicase ATP-binding domain. 25–32 (AAAGSGKT) contacts ATP. Residues 517–815 (KFKDTIVGGP…RIMSIHKSKG (299 aa)) form the UvrD-like helicase C-terminal domain.

The protein belongs to the helicase family. AddA subfamily. In terms of assembly, heterodimer of AddA and AddB/RexB. The cofactor is Mg(2+).

The enzyme catalyses Couples ATP hydrolysis with the unwinding of duplex DNA by translocating in the 3'-5' direction.. It catalyses the reaction ATP + H2O = ADP + phosphate + H(+). The heterodimer acts as both an ATP-dependent DNA helicase and an ATP-dependent, dual-direction single-stranded exonuclease. Recognizes the chi site generating a DNA molecule suitable for the initiation of homologous recombination. The AddA nuclease domain is required for chi fragment generation; this subunit has the helicase and 3' -&gt; 5' nuclease activities. This Clostridium beijerinckii (strain ATCC 51743 / NCIMB 8052) (Clostridium acetobutylicum) protein is ATP-dependent helicase/nuclease subunit A.